A 702-amino-acid chain; its full sequence is Phosphoglycerol transferase I (702 aa).

The next 3 helical transmembrane spans lie at 5–24 (LLVS…RLAW), 73–95 (GYIA…VRIR), and 102–124 (GGGA…SPLY).

It belongs to the OpgB family.

It is found in the cell inner membrane. It catalyses the reaction a phosphatidylglycerol + a membrane-derived-oligosaccharide D-glucose = a 1,2-diacyl-sn-glycerol + a membrane-derived-oligosaccharide 6-(glycerophospho)-D-glucose.. It participates in glycan metabolism; osmoregulated periplasmic glucan (OPG) biosynthesis. Its function is as follows. Transfers a phosphoglycerol residue from phosphatidylglycerol to the membrane-bound nascent glucan backbones. The chain is Phosphoglycerol transferase I from Xanthomonas axonopodis pv. citri (strain 306).